The primary structure comprises 344 residues: Anthranilate phosphoribosyltransferase (344 aa).

5-phospho-alpha-D-ribose 1-diphosphate-binding positions include Gly80, 83–84 (GD), Thr88, 90–93 (NVST), 108–116 (KHGNRSVSS), and Ser120. Gly80 contacts anthranilate. Ser92 serves as a coordination point for Mg(2+). Residue Asn111 coordinates anthranilate. Arg166 is an anthranilate binding site. Mg(2+) contacts are provided by Asp225 and Glu226.

Belongs to the anthranilate phosphoribosyltransferase family. In terms of assembly, homodimer. The cofactor is Mg(2+).

It catalyses the reaction N-(5-phospho-beta-D-ribosyl)anthranilate + diphosphate = 5-phospho-alpha-D-ribose 1-diphosphate + anthranilate. Its pathway is amino-acid biosynthesis; L-tryptophan biosynthesis; L-tryptophan from chorismate: step 2/5. Its function is as follows. Catalyzes the transfer of the phosphoribosyl group of 5-phosphorylribose-1-pyrophosphate (PRPP) to anthranilate to yield N-(5'-phosphoribosyl)-anthranilate (PRA). This Legionella pneumophila (strain Lens) protein is Anthranilate phosphoribosyltransferase.